Here is a 667-residue protein sequence, read N- to C-terminus: Zeaxanthin epoxidase, chloroplastic (667 aa).

A chloroplast-targeting transit peptide spans 1 to 59; that stretch reads MGSTPFCYSINPSPSKLDFTRTHVFSPVSKQFYLDLSSFSGKPGGVSGFRSRRALLGVK. Residues 82–110 and 360–373 each bind FAD; these read RVLVAGGGIGGLVFALAAKKKGFDVLVFE and GFTWGKGRVTLLGD. Positions 558 to 612 constitute an FHA domain; sequence CIVGSEPDQDFPGMRIVIPSSQVSKMHARVIYKDGAFFLMDLRSEHGTYVTDNEG.

FAD is required as a cofactor. Expressed in leaves, stems and flowers, and at lower levels in roots and siliques.

The protein resides in the plastid. The protein localises to the chloroplast. The catalysed reaction is all-trans-zeaxanthin + 4 reduced [2Fe-2S]-[ferredoxin] + 2 O2 + 4 H(+) = all-trans-violaxanthin + 4 oxidized [2Fe-2S]-[ferredoxin] + 2 H2O. It participates in plant hormone biosynthesis; abscisate biosynthesis. In terms of biological role, zeaxanthin epoxidase that plays an important role in the xanthophyll cycle and abscisic acid (ABA) biosynthesis. Converts zeaxanthin into antheraxanthin and subsequently violaxanthin. Required for resistance to osmotic and drought stresses, ABA-dependent stomatal closure, seed development and dormancy, modulation of defense gene expression and disease resistance and non-photochemical quencing (NPQ). Through its role in ABA biosynthesis, regulates the expression of stress-responsive genes such as RD29A during osmotic stress and is required for normal plant growth during vegetative development. Is required for late skotomorphogenic growth through its role in the xanthophyll carotenoids neoxanthin, violaxanthin and antheraxanthin biosynthesis. Required for beta-aminobutyric acid (BABA)-induced priming in disease resistance, tolerance to salt and drought stresses and sterility. Participates in NPQ by regulating the level of zeaxanthin in photosynthetic energy conversion. NPQ is a process that maintains the balance between dissipation and utilization of light energy to minimize the generation of oxidizing molecules and the molecular damages they can generate. This is Zeaxanthin epoxidase, chloroplastic (ZEP) from Arabidopsis thaliana (Mouse-ear cress).